The sequence spans 222 residues: Collectrin (222 aa).

Residues 1–14 (MLWALFFLVTTIHA) form the signal peptide. Over 15–141 (ELCHPDAENA…LAPPMEPSVP (127 aa)) the chain is Extracellular. Residues 21 to 222 (AENAFKVRLS…LTEDERLTPL (202 aa)) form the Collectrin-like domain. 2 N-linked (GlcNAc...) asparagine glycosylation sites follow: Asn-76 and Asn-93. The helical transmembrane segment at 142-162 (VWIIVFGVIFCIVTVAIALLV) threads the bilayer. Topologically, residues 163 to 222 (LSGIRQRRRNNKGPPGVEDAEDKCENIITIENGIPCDPLDMKGGHINDGFLTEDERLTPL) are cytoplasmic. Phosphothreonine is present on residues Thr-214 and Thr-220.

This sequence belongs to the CLTRN family. In terms of assembly, monomer. Homodimer. Homodimer; dimerization prevents CLTRN cleavage by BACE2. Interacts with SNAPIN. Interacts with SLC6A18; this interaction regulates the trafficking of SLC6A18 to the cell membrane and its amino acid transporter activity. Interacts with SLC6A19; this interaction regulates the trafficking of SLC6A19 to the cell membrane and its amino acid transporter activity. Interacts with SLC6A20B. Post-translationally, glycosylated. Glycosylation is required for plasma membrane localization and for its cleavage by BACE2. Proteolytically processed in pancreatic beta cells by BACE2 leading to the generation and extracellular release of soluble CLTRN, and a corresponding cell-associated C-terminal fragment which is later cleaved by gamma-secretase. This shedding process inactivates CLTRN. Three cleavage sites have been identified for BACE2, two clustered sites after Phe-116 and Leu-118 and a more membrane proximal site at Phe-125; the preferred BACE2 cleavage site seems to be between Phe-125 and Leu-126, Phe-116 and Leu-118 act as alternative sites. In terms of tissue distribution, expressed on the apical surface of the proximal tubules in the renal cortex (at protein level). Kidney; collecting ducts and proximal tubule. Pancreas; beta cells of islets. Expressed in the cerebral cortex, hippocampus, brainstem and cerebellum.

It is found in the cell membrane. Functionally, plays an important role in amino acid transport by acting as binding partner of amino acid transporters SLC6A18 and SLC6A19, regulating their trafficking on the cell surface and their activity. May also play a role in trafficking of amino acid transporters SLC3A1 and SLC7A9 to the renal cortical cell membrane. Regulator of SNARE complex function. Stimulator of beta cell replication. This Mus musculus (Mouse) protein is Collectrin.